Reading from the N-terminus, the 646-residue chain is RNA-binding protein RMD9, mitochondrial (646 aa).

A mitochondrion-targeting transit peptide spans 1–14 (MMLRRNAVRSLKTM). A propeptide spans 15 to 51 (EISVSNVVNSGSIAMLRGKLANVVLSDRTYHSSPIFH) (removed in mature form). A PPR1 repeat occupies 209–238 (VSGYGATHLLTSFKELSFDDDCIRIWEASK). One copy of the PPR2 repeat lies at 251-282 (EPKVVGFMLPLLYAKTRSLTEPNELYNQIIQS). A PPR3 repeat occupies 288 to 317 (PNLYSGLIKVFIKAEDYEKALSLFGQLCEK). The PPR4 repeat unit spans residues 323-353 (YGYLIETHLSFIGDSKNLTLAESFFDKIIND). Residues 363-394 (VSTVNSFLQNIWKAQNDFDHVYRIWEKAVKFY) form a PPR5 repeat. The stretch at 401-439 (GILSSLNNTFFTIFFENYINDNINGFRKLQEIITFYSGV) is one PPR6 repeat. A PPR7 repeat occupies 444 to 473 (EPFFNVMLTRASIWHERSIIDFIDKNYTLY). One copy of the PPR8 repeat lies at 481 to 514 (SYRILLKSLGSIDNTNNEEILDRWLELVKKLNEL).

The protein belongs to the RMD9 family. In terms of assembly, monomer. In terms of processing, phosphorylated. Phosphorylation promotes binding to RNA.

It localises to the mitochondrion inner membrane. Binds the RNA motif 5'-AAUAA[U/C]AUUCUU-3' in the 3'-UTR of mitochondrial mRNAs. Involved in the processing or stability of mitochondrial mRNAs. The polypeptide is RNA-binding protein RMD9, mitochondrial (Saccharomyces cerevisiae (strain ATCC 204508 / S288c) (Baker's yeast)).